The sequence spans 243 residues: CTD nuclear envelope phosphatase 1 homolog (243 aa).

The helical transmembrane segment at 11-27 (ALLLLLSKVWTCICFMF) threads the bilayer. An FCP1 homology domain is found at 56 to 223 (SLVQRKTLVL…LSLLPMLDAL (168 aa)).

This sequence belongs to the dullard family.

The protein localises to the membrane. It carries out the reaction O-phospho-L-seryl-[protein] + H2O = L-seryl-[protein] + phosphate. The enzyme catalyses O-phospho-L-threonyl-[protein] + H2O = L-threonyl-[protein] + phosphate. Serine/threonine protein phosphatase that may dephosphorylate and activate lipin-like phosphatases. Lipins are phosphatidate phosphatases that catalyze the conversion of phosphatidic acid to diacylglycerol and control the metabolism of fatty acids at different levels. May indirectly modulate the lipid composition of nuclear and/or endoplasmic reticulum membranes and be required for proper nuclear membrane morphology and/or dynamics. May also indirectly regulate the production of lipid droplets and triacylglycerol. This chain is CTD nuclear envelope phosphatase 1 homolog (l(1)G0269), found in Drosophila pseudoobscura pseudoobscura (Fruit fly).